The primary structure comprises 629 residues: 1-deoxy-D-xylulose-5-phosphate synthase (629 aa).

Thiamine diphosphate contacts are provided by residues His-72 and 113-115 (GHA). Asp-144 is a Mg(2+) binding site. Thiamine diphosphate is bound by residues 145 to 146 (GA), Asn-174, Tyr-287, and Glu-370. A Mg(2+)-binding site is contributed by Asn-174.

This sequence belongs to the transketolase family. DXPS subfamily. Homodimer. Requires Mg(2+) as cofactor. It depends on thiamine diphosphate as a cofactor.

It carries out the reaction D-glyceraldehyde 3-phosphate + pyruvate + H(+) = 1-deoxy-D-xylulose 5-phosphate + CO2. It functions in the pathway metabolic intermediate biosynthesis; 1-deoxy-D-xylulose 5-phosphate biosynthesis; 1-deoxy-D-xylulose 5-phosphate from D-glyceraldehyde 3-phosphate and pyruvate: step 1/1. Catalyzes the acyloin condensation reaction between C atoms 2 and 3 of pyruvate and glyceraldehyde 3-phosphate to yield 1-deoxy-D-xylulose-5-phosphate (DXP). The protein is 1-deoxy-D-xylulose-5-phosphate synthase of Prochlorococcus marinus (strain MIT 9215).